The following is a 160-amino-acid chain: 6,7-dimethyl-8-ribityllumazine synthase (160 aa).

Residues Trp31, 65 to 67 (SFE), and 89 to 91 (CVV) each bind 5-amino-6-(D-ribitylamino)uracil. (2S)-2-hydroxy-3-oxobutyl phosphate is bound at residue 94–95 (DT). His97 (proton donor) is an active-site residue. Phe122 is a binding site for 5-amino-6-(D-ribitylamino)uracil. Arg136 is a (2S)-2-hydroxy-3-oxobutyl phosphate binding site.

The protein belongs to the DMRL synthase family.

It carries out the reaction (2S)-2-hydroxy-3-oxobutyl phosphate + 5-amino-6-(D-ribitylamino)uracil = 6,7-dimethyl-8-(1-D-ribityl)lumazine + phosphate + 2 H2O + H(+). It functions in the pathway cofactor biosynthesis; riboflavin biosynthesis; riboflavin from 2-hydroxy-3-oxobutyl phosphate and 5-amino-6-(D-ribitylamino)uracil: step 1/2. Catalyzes the formation of 6,7-dimethyl-8-ribityllumazine by condensation of 5-amino-6-(D-ribitylamino)uracil with 3,4-dihydroxy-2-butanone 4-phosphate. This is the penultimate step in the biosynthesis of riboflavin. This Parabacteroides distasonis (strain ATCC 8503 / DSM 20701 / CIP 104284 / JCM 5825 / NCTC 11152) protein is 6,7-dimethyl-8-ribityllumazine synthase.